A 558-amino-acid chain; its full sequence is Putative F-box/LRR-repeat protein R542 (558 aa).

The 47-residue stretch at 1-47 (MLLNLPYEILLIIFSLIESKKFFKLLSINKEVREFILTMLNQNPKSF) folds into the F-box domain. LRR repeat units lie at residues 73–105 (KSTI…GLSF), 139–176 (CGKI…NLQC), 177–220 (CMRI…KIDG), 251–284 (LDKL…DLSG), 285–317 (CINL…GLSY), 329–361 (CFRI…GFFY), 369–395 (VVGY…TISD), 420–444 (CNNI…DLRY), 445–477 (CNNI…GISY), and 481–508 (SKKI…VFKT).

The sequence is that of Putative F-box/LRR-repeat protein R542 from Acanthamoeba polyphaga mimivirus (APMV).